The primary structure comprises 209 residues: Vacuolar protein sorting-associated protein 28 homolog (209 aa).

The VPS28 N-terminal domain occupies 1-105; that stretch reads MSQNSNLMRE…REGRPITVKD (105 aa). The VPS28 C-terminal domain occupies 109-205; that stretch reads NVLKHIASIV…AYQSFQKALN (97 aa).

It belongs to the VPS28 family. Component of the ESCRT-I complex (endosomal sorting complex required for transport I).

The protein resides in the endosome. Component of the ESCRT-I complex, a regulator of vesicular trafficking process. The polypeptide is Vacuolar protein sorting-associated protein 28 homolog (Caenorhabditis briggsae).